The following is a 131-amino-acid chain: Small ribosomal subunit protein uS11 (131 aa).

It belongs to the universal ribosomal protein uS11 family. As to quaternary structure, part of the 30S ribosomal subunit. Interacts with proteins S7 and S18. Binds to IF-3.

Functionally, located on the platform of the 30S subunit, it bridges several disparate RNA helices of the 16S rRNA. Forms part of the Shine-Dalgarno cleft in the 70S ribosome. This Trichormus variabilis (strain ATCC 29413 / PCC 7937) (Anabaena variabilis) protein is Small ribosomal subunit protein uS11.